The chain runs to 579 residues: MTRVKDPEKLPDATGVYIFRDRDDRVLYVGKSISIRKRVSSYFREQENPRLRIMMRHLESIEYILTQNEKEALILESNLIKRYRPPYNVRLKDDKRYPFIKITDEEYPRVLIVRTIGRDSARYYGPFTDTGAVRRTLKLIKSLFRIRSCRRMDGPCLNSQIDLCYAPCDGRISREDYREIIEKVDLFFQGRYQEVIEVLEEEMKEASERLEFERAARIRDQIESIREVMERQHASFTDSIDQDIVALERGGDTSAVVVLQIRDGKITGKDDFILRGSAPRTEILEAFLKQYYAIPRRVPSEILTQYPVEDGVIAEWLSELRGEEVKIHSPEGGAGRRLLNIAWKNASVILKQKGRVRDALLQLKDDLKLPEIPRRMEGLDISNIAGESATGSVAVFIDGKPSSGSYRRYRISAQGPDDYAMMRELVERRYSSPELRKPDLVLIDGGKGQLGVALEALKNCGVHVPVVGIAKKREEVYLPGLSEPVDVDDGALQILRHLRDEAHRFAVKYHRTIRDRDSLESELDGIRGVGPVRKRALLEHFGSLDGVRDASVEELASIPGMTREVAERIHRHFSGDLAG.

Positions 12 to 89 (DATGVYIFRD…IKRYRPPYNV (78 aa)) constitute a GIY-YIG domain. In terms of domain architecture, UVR spans 193–228 (QEVIEVLEEEMKEASERLEFERAARIRDQIESIREV).

Belongs to the UvrC family. As to quaternary structure, interacts with UvrB in an incision complex.

The protein localises to the cytoplasm. In terms of biological role, the UvrABC repair system catalyzes the recognition and processing of DNA lesions. UvrC both incises the 5' and 3' sides of the lesion. The N-terminal half is responsible for the 3' incision and the C-terminal half is responsible for the 5' incision. This is UvrABC system protein C from Methanothermobacter thermautotrophicus (strain ATCC 29096 / DSM 1053 / JCM 10044 / NBRC 100330 / Delta H) (Methanobacterium thermoautotrophicum).